Here is a 225-residue protein sequence, read N- to C-terminus: Small ribosomal subunit protein uS5 (225 aa).

In terms of domain architecture, S5 DRBM spans 57–120; it reads LEEQVLDVKL…AHAKLSLIKV (64 aa).

The protein belongs to the universal ribosomal protein uS5 family. In terms of assembly, part of the 30S ribosomal subunit. Contacts protein S4.

In terms of biological role, with S4 and S12 plays an important role in translational accuracy. The sequence is that of Small ribosomal subunit protein uS5 from Methanococcus maripaludis (strain DSM 14266 / JCM 13030 / NBRC 101832 / S2 / LL).